The primary structure comprises 341 residues: Retinol dehydrogenase 10 (341 aa).

The helical; Signal-anchor transmembrane segment at 3 to 23 (IVLEFFLVTFKVLWAFVLAAA) threads the bilayer. 40–64 (LITGAGSGLGRLFALEFARRRAQLV) is a binding site for NADP(+). Ser-197 lines the substrate pocket. The Proton acceptor role is filled by Tyr-210.

Belongs to the short-chain dehydrogenases/reductases (SDR) family.

The protein localises to the microsome membrane. The protein resides in the endoplasmic reticulum membrane. The enzyme catalyses all-trans-retinol + NADP(+) = all-trans-retinal + NADPH + H(+). It participates in cofactor metabolism; retinol metabolism. In terms of biological role, retinol dehydrogenase with a clear preference for NADP. Converts all-trans-retinol to all-trans-retinal. Has no detectable activity towards 11-cis-retinol, 9-cis-retinol and 13-cis-retinol. This chain is Retinol dehydrogenase 10 (rdh10), found in Xenopus tropicalis (Western clawed frog).